Consider the following 423-residue polypeptide: Gamma-glutamyl phosphate reductase (423 aa).

This sequence belongs to the gamma-glutamyl phosphate reductase family.

Its subcellular location is the cytoplasm. It catalyses the reaction L-glutamate 5-semialdehyde + phosphate + NADP(+) = L-glutamyl 5-phosphate + NADPH + H(+). It functions in the pathway amino-acid biosynthesis; L-proline biosynthesis; L-glutamate 5-semialdehyde from L-glutamate: step 2/2. Functionally, catalyzes the NADPH-dependent reduction of L-glutamate 5-phosphate into L-glutamate 5-semialdehyde and phosphate. The product spontaneously undergoes cyclization to form 1-pyrroline-5-carboxylate. This is Gamma-glutamyl phosphate reductase from Pseudomonas putida (strain ATCC 700007 / DSM 6899 / JCM 31910 / BCRC 17059 / LMG 24140 / F1).